The chain runs to 187 residues: Sodium/potassium ATPase inhibitor SPAI-2 (187 aa).

Positions 1–21 (MRSRSFLVLVAVFLICETLVA) are cleaved as a signal peptide. The residue at position 22 (Gln-22) is a Pyrrolidone carboxylic acid. Residues 22–126 (QRLDRIRGPK…NAQLPDKVQD (105 aa)) constitute a propeptide that is removed on maturation. The disordered stretch occupies residues 28-98 (RGPKGQGQDP…QDPVKAELPD (71 aa)). A run of 14 repeats spans residues 34-39 (GQDPVE), 40-45 (GQDQDE), 46-51 (GPGPVK), 58-63 (GQDPVK), 64-69 (GQDPVK), 70-75 (GQDPVK), 76-81 (GQDPVK), 82-87 (GQDLVK), 88-93 (SQDPVK), 100-105 (GQDVVK), 106-111 (GHEPVE), 112-117 (GQDPVN), 118-123 (AQLPDK), and 124-129 (VQDPVK). The interval 34 to 129 (GQDPVEGQDQ…LPDKVQDPVK (96 aa)) is 14 X 6 AA approximate tandem repeats. The SVP-1 clotting 1 repeat unit spans residues 64-85 (GQDPVKGQDPVKGQDPVKGQDL). Residues 139-187 (LLSKRGHCPRILFRCPLSNPSNKCWRDYDCPGVKKCCEGFCGKDCLYPK) enclose the WAP domain. 4 disulfide bridges follow: Cys-146/Cys-175, Cys-153/Cys-179, Cys-162/Cys-174, and Cys-168/Cys-183.

The short form (AA 127-187) may be an artifact due to the strongly acidic conditions of the duodenum. The pro-SPAI form may be the native form. In terms of tissue distribution, small intestine &gt; large intestine. The plasma contains the pro-SPAI form circulating.

Inhibits Na(+),K(+) ATPase by the competitive mode against Na(+). In Sus scrofa (Pig), this protein is Sodium/potassium ATPase inhibitor SPAI-2.